The following is a 123-amino-acid chain: Thioredoxin domain-containing protein 17 (123 aa).

The region spanning 41–123 (SWCPDCVTAE…DLVRMMFTED (83 aa)) is the Thioredoxin domain. Active-site nucleophile residues include Cys-43 and Cys-46. A disulfide bond links Cys-43 and Cys-46.

This sequence belongs to the thioredoxin family. In terms of tissue distribution, predominantly expressed in liver, brain and muscle. Also expressed in kidney, intestine, skin, stomach, gill and head kidney.

It localises to the cytoplasm. In terms of biological role, disulfide reductase. May participate in various redox reactions through the reversible oxidation of its active center dithiol to a disulfide and catalyze dithiol-disulfide exchange reactions. Has peroxidase activity and may contribute to the elimination of cellular hydrogen peroxide. May function as an antioxidant involved in response to viral infection. This Epinephelus coioides (Orange-spotted grouper) protein is Thioredoxin domain-containing protein 17.